The following is a 270-amino-acid chain: MADSYLHAPTLVRATTPLVQCLTNAVVMQFTANALLAIGASPAMVDTPAESFDFAGVADGVLINAGTPSAEQYAGMERAIEGATAAGTPWVLDPVGVGGLAERSAFLRRAVDKHPAAIRGNASEIVALAGLGAGGRGVDATDDVADAVEAAQVLARRTGGVVAVTGAEDLIVSRGRVSWLKSGDPMLQLVIGTGCALGAVTAAYLGATQDTDIDPHDAVVAAHAHLGAAGRIAATRATAPGSYAVALIDALHQLDRNQLANLTHLREENR.

Met44 is a substrate binding site. ATP-binding residues include Arg119 and Thr165. Gly192 is a substrate binding site.

This sequence belongs to the Thz kinase family. Mg(2+) is required as a cofactor.

It catalyses the reaction 5-(2-hydroxyethyl)-4-methylthiazole + ATP = 4-methyl-5-(2-phosphooxyethyl)-thiazole + ADP + H(+). It functions in the pathway cofactor biosynthesis; thiamine diphosphate biosynthesis; 4-methyl-5-(2-phosphoethyl)-thiazole from 5-(2-hydroxyethyl)-4-methylthiazole: step 1/1. Its function is as follows. Catalyzes the phosphorylation of the hydroxyl group of 4-methyl-5-beta-hydroxyethylthiazole (THZ). The polypeptide is Hydroxyethylthiazole kinase (Corynebacterium efficiens (strain DSM 44549 / YS-314 / AJ 12310 / JCM 11189 / NBRC 100395)).